A 91-amino-acid polypeptide reads, in one-letter code: Kazal-type trypsin inhibitor (91 aa).

A signal peptide spans 1 to 22; it reads MRHIGVFVGVLALALVLLVVEA. In terms of domain architecture, Kazal-like spans 25–78; it reads DAERGVCACPRIYMPVCGSNLKTYNNDCLLRCEINSDLGRANNLRKIADQACDN. Cystine bridges form between cysteine 31–cysteine 56, cysteine 33–cysteine 52, and cysteine 41–cysteine 76. An N-linked (GlcNAc...) asparagine glycan is attached at asparagine 78.

In terms of assembly, interacts with human PLG (plasmin). Female salivary gland. Female gut at 3 and 24 hours after blood feeding. Female carcass. Male tissues. Not detected in ovary and fat body at 3 and 24 hours after blood feeding.

The protein resides in the secreted. In terms of biological role, anticoagulant protein that decreases host thrombin (F2) activity via an uncompetitive inhibition mechanism. Inhibits amidolytic activity of host plasmin (PLG). Inhibits amidolytic activity of host trypsin. Inhibits trypsin-like endogenous activity from gut of female mosquitoes 24 hours after feeding and weakly affects enzyme activity from gut 3 hours after feeding, suggesting a possible role as an inhibitor of endogenous proteases. Functionally, (Microbial infection) Limits host plasmin-mediated enhancement of dengue virus type 2 infection in mosquito midgut. In Aedes aegypti (Yellowfever mosquito), this protein is Kazal-type trypsin inhibitor.